The primary structure comprises 544 residues: Chaperonin GroEL (544 aa).

ATP is bound by residues 30 to 33, Lys51, 87 to 91, Gly415, 481 to 483, and Asp497; these read TLGP, DGTTT, and DAL.

The protein belongs to the chaperonin (HSP60) family. Forms a cylinder of 14 subunits composed of two heptameric rings stacked back-to-back. Interacts with the co-chaperonin GroES.

The protein localises to the cytoplasm. The enzyme catalyses ATP + H2O + a folded polypeptide = ADP + phosphate + an unfolded polypeptide.. Together with its co-chaperonin GroES, plays an essential role in assisting protein folding. The GroEL-GroES system forms a nano-cage that allows encapsulation of the non-native substrate proteins and provides a physical environment optimized to promote and accelerate protein folding. The chain is Chaperonin GroEL from Chlamydia trachomatis serovar A (strain ATCC VR-571B / DSM 19440 / HAR-13).